The sequence spans 118 residues: MFQGKCAFFDETVPSALIALWQLHNGEAKFLAEGYENFDYAFSMHLRKHVRLPNYKSVQCRSPWWIAEQVAVSRSKSYVSEPVIHLNVMEPLYVDHRIRSVYLQPLPSTLSFLNGELP.

In terms of assembly, interacts with bqt1. The bqt1-bqt2-sad1 complex binds rap1.

It is found in the cytoplasm. It localises to the nucleus. Its subcellular location is the cytoskeleton. The protein resides in the microtubule organizing center. The protein localises to the spindle pole body. It is found in the chromosome. It localises to the telomere. Functionally, involved in chromosome segregation. During meiotic prophase, connects telomeres to the spindle pole body by forming a bridge between the telomere protein rap1 and the spindle pole body protein sad1. In Schizosaccharomyces pombe (strain 972 / ATCC 24843) (Fission yeast), this protein is Telomere bouquet protein 2 (bqt2).